The following is a 294-amino-acid chain: Transcription factor nsy-7 (294 aa).

Disordered stretches follow at residues 43-119 (CNLR…TPDL) and 167-191 (LRLP…DSPL). 2 stretches are compositionally biased toward polar residues: residues 52 to 63 (DQPTTSSNSVKE) and 81 to 115 (RRQS…SNDP). The segment at residues 192–232 (QTRMKGWQREYIKEVIKDSHYPTEEELRDIEQKCDLSRKQI) is a DNA-binding region (homeobox; atypical). The segment at 238-274 (KRLTNPNRKPRVNHHDEKRKEQEERDSLADPDDDMIN) is disordered. The span at 250–265 (NHHDEKRKEQEERDSL) shows a compositional bias: basic and acidic residues.

Expressed widely, including gut, the amphid sheath glial cells, and head and tail neurons including AWC, ASE, and ASH. Expressed in AWC (ON) olfactory neuron but not AWC (OFF).

The protein localises to the nucleus. Its function is as follows. Transcriptional regulator which binds DNA consensus sequence 5'-CCTTAAC-3'. Plays a role in establishing and maintaining asymmetric cell fates in chemosensory AWC neurons during larval neuronal development. This is achieved by repressing the expression of multiple AWC (OFF) genes, including srsx-3 and hlh-11 in the AWC (ON) neuron. Activates expression of sox-2 in the AWC (ON) neuron. The protein is Transcription factor nsy-7 of Caenorhabditis elegans.